The sequence spans 237 residues: Segregation and condensation protein A (237 aa).

It belongs to the ScpA family. Component of a cohesin-like complex composed of ScpA, ScpB and the Smc homodimer, in which ScpA and ScpB bind to the head domain of Smc. The presence of the three proteins is required for the association of the complex with DNA.

The protein resides in the cytoplasm. In terms of biological role, participates in chromosomal partition during cell division. May act via the formation of a condensin-like complex containing Smc and ScpB that pull DNA away from mid-cell into both cell halves. This is Segregation and condensation protein A from Streptococcus thermophilus (strain CNRZ 1066).